The sequence spans 185 residues: Methanol dehydrogenase activator (185 aa).

It belongs to the Nudix hydrolase family. Homodimer. The cofactor is Mg(2+).

In terms of biological role, involved in the activation of the NAD-dependent methanol dehydrogenase (MDH). MDH activation by Act involves hydrolytic removal of the nicotinamide mononucleotide (NMN) moiety of the NAD cofactor, changing its ping-pong type of reaction mechanism into a ternary complex reaction mechanism. It requires the presence of magnesium ions and is also able to use ADP-ribose. This chain is Methanol dehydrogenase activator, found in Bacillus methanolicus.